We begin with the raw amino-acid sequence, 396 residues long: Cystathionine beta-lyase (396 aa).

An N6-(pyridoxal phosphate)lysine modification is found at Lys211.

It belongs to the trans-sulfuration enzymes family. In terms of assembly, homotetramer. It depends on pyridoxal 5'-phosphate as a cofactor.

It localises to the cytoplasm. It carries out the reaction L,L-cystathionine + H2O = L-homocysteine + pyruvate + NH4(+). The enzyme catalyses an S-substituted L-cysteine + H2O = a thiol + pyruvate + NH4(+). The protein operates within amino-acid biosynthesis; L-methionine biosynthesis via de novo pathway; L-homocysteine from L-cystathionine: step 1/1. Catalyzes the cleavage of cystathionine to homocysteine, pyruvate and ammonia during methionine biosynthesis. This is Cystathionine beta-lyase (metC) from Haemophilus influenzae (strain ATCC 51907 / DSM 11121 / KW20 / Rd).